The primary structure comprises 260 residues: Acetylglutamate kinase (260 aa).

Substrate contacts are provided by residues 41-42, arginine 63, and asparagine 157; that span reads GG.

It belongs to the acetylglutamate kinase family. ArgB subfamily.

The protein resides in the cytoplasm. The catalysed reaction is N-acetyl-L-glutamate + ATP = N-acetyl-L-glutamyl 5-phosphate + ADP. Its pathway is amino-acid biosynthesis; L-arginine biosynthesis; N(2)-acetyl-L-ornithine from L-glutamate: step 2/4. Its function is as follows. Catalyzes the ATP-dependent phosphorylation of N-acetyl-L-glutamate. The protein is Acetylglutamate kinase of Acidobacterium capsulatum (strain ATCC 51196 / DSM 11244 / BCRC 80197 / JCM 7670 / NBRC 15755 / NCIMB 13165 / 161).